The primary structure comprises 690 residues: Polyphosphate kinase (690 aa).

Asn45 contributes to the ATP binding site. 2 residues coordinate Mg(2+): Arg375 and Arg405. His435 serves as the catalytic Phosphohistidine intermediate. ATP contacts are provided by Tyr468, Arg564, and His592.

This sequence belongs to the polyphosphate kinase 1 (PPK1) family. It depends on Mg(2+) as a cofactor. An intermediate of this reaction is the autophosphorylated ppk in which a phosphate is covalently linked to a histidine residue through a N-P bond.

It catalyses the reaction [phosphate](n) + ATP = [phosphate](n+1) + ADP. In terms of biological role, catalyzes the reversible transfer of the terminal phosphate of ATP to form a long-chain polyphosphate (polyP). The sequence is that of Polyphosphate kinase from Pseudomonas aeruginosa (strain ATCC 15692 / DSM 22644 / CIP 104116 / JCM 14847 / LMG 12228 / 1C / PRS 101 / PAO1).